Consider the following 491-residue polypeptide: Ketol-acid reductoisomerase (NADP(+)) (491 aa).

The 194-residue stretch at 15–208 (AQLGKCRFMG…GGHRAGVLES (194 aa)) folds into the KARI N-terminal Rossmann domain. Residues 45–48 (CGAQ), Arg68, Arg76, Ser78, and 108–110 (DKQ) each bind NADP(+). His132 is an active-site residue. Gly158 provides a ligand contact to NADP(+). 2 consecutive KARI C-terminal knotted domains span residues 209-344 (SFVA…TAPQ) and 345-484 (YEGK…MTDM). Positions 217, 221, 389, and 393 each coordinate Mg(2+). Residue Ser414 participates in substrate binding.

The protein belongs to the ketol-acid reductoisomerase family. Mg(2+) serves as cofactor.

It carries out the reaction (2R)-2,3-dihydroxy-3-methylbutanoate + NADP(+) = (2S)-2-acetolactate + NADPH + H(+). The enzyme catalyses (2R,3R)-2,3-dihydroxy-3-methylpentanoate + NADP(+) = (S)-2-ethyl-2-hydroxy-3-oxobutanoate + NADPH + H(+). Its pathway is amino-acid biosynthesis; L-isoleucine biosynthesis; L-isoleucine from 2-oxobutanoate: step 2/4. The protein operates within amino-acid biosynthesis; L-valine biosynthesis; L-valine from pyruvate: step 2/4. In terms of biological role, involved in the biosynthesis of branched-chain amino acids (BCAA). Catalyzes an alkyl-migration followed by a ketol-acid reduction of (S)-2-acetolactate (S2AL) to yield (R)-2,3-dihydroxy-isovalerate. In the isomerase reaction, S2AL is rearranged via a Mg-dependent methyl migration to produce 3-hydroxy-3-methyl-2-ketobutyrate (HMKB). In the reductase reaction, this 2-ketoacid undergoes a metal-dependent reduction by NADPH to yield (R)-2,3-dihydroxy-isovalerate. The sequence is that of Ketol-acid reductoisomerase (NADP(+)) from Salmonella typhimurium (strain LT2 / SGSC1412 / ATCC 700720).